The sequence spans 572 residues: mRNA cap guanine-N(7) methyltransferase (572 aa).

2 disordered regions span residues 1 to 75 (MPED…GSRV) and 110 to 140 (EKAINTANPPPPSTTTTPSSTTSSSSSFPSS). 2 stretches are compositionally biased toward basic and acidic residues: residues 24-39 (ANDGHTEFSRRDRVHD) and 59-69 (SADENKDKKYD). The segment covering 123–140 (TTTTPSSTTSSSSSFPSS) has biased composition (low complexity). The region spanning 262–571 (SPIYKLRNFN…FYVAFVFEKV (310 aa)) is the mRNA cap 0 methyltransferase domain. 271 to 272 (NN) provides a ligand contact to mRNA. S-adenosyl-L-methionine-binding residues include Lys-275, Cys-302, Asp-324, Asp-366, Gln-396, and Tyr-401.

It belongs to the class I-like SAM-binding methyltransferase superfamily. mRNA cap 0 methyltransferase family.

It is found in the nucleus. It carries out the reaction a 5'-end (5'-triphosphoguanosine)-ribonucleoside in mRNA + S-adenosyl-L-methionine = a 5'-end (N(7)-methyl 5'-triphosphoguanosine)-ribonucleoside in mRNA + S-adenosyl-L-homocysteine. Responsible for methylating the 5'-cap structure of mRNAs. The chain is mRNA cap guanine-N(7) methyltransferase (ABD1) from Lodderomyces elongisporus (strain ATCC 11503 / CBS 2605 / JCM 1781 / NBRC 1676 / NRRL YB-4239) (Yeast).